A 294-amino-acid polypeptide reads, in one-letter code: Filamin-B (294 aa).

2 Filamin repeats span residues 1–67 (GTRL…KVRV) and 71–163 (GQAG…KAKV). Phosphoserine occurs at positions 61 and 157. Lysine 160 is covalently cross-linked (Glycyl lysine isopeptide (Lys-Gly) (interchain with G-Cter in ISG15)). The segment at 164–198 (TGQRLVGPGSTNETSSILVESVTRSSTETCYSAIP) is hinge 2. The interval 164–294 (TGQRLVGPGS…PGSPFHVTVP (131 aa)) is self-association site, tail. Residues serine 173 and serine 184 each carry the phosphoserine modification. One copy of the Filamin 24 repeat lies at 199 to 293 (KASSDASKVT…IPGSPFHVTV (95 aa)). Residues lysine 210 and lysine 216 each carry the N6-succinyllysine modification. Lysine 268 bears the N6-acetyllysine mark.

The protein belongs to the filamin family. In terms of assembly, homodimer. Interacts with FLNA, FLNC, INPPL1, ITGB1A, ITGB1D, ITGB3, ITGB6, MYOT, MYOZ1, PSEN1 and PSEN2. Interacts with MICALL2. Interacts with RFLNA and RFLNB. Interacts with HTLV-I viral p13 protein. Interacts with ASB2; the interaction targets FLNB for proteasomal degradation. ISGylation prevents ability to interact with the upstream activators of the JNK cascade and inhibits IFNA-induced JNK signaling. Post-translationally, ubiquitination by a SCF-like complex containing ASB2 leads to proteasomal degradation which promotes muscle differentiation.

The protein resides in the cytoplasm. It localises to the cell cortex. The protein localises to the cytoskeleton. Its subcellular location is the myofibril. It is found in the sarcomere. The protein resides in the z line. Connects cell membrane constituents to the actin cytoskeleton. May promote orthogonal branching of actin filaments and links actin filaments to membrane glycoproteins. Anchors various transmembrane proteins to the actin cytoskeleton. The sequence is that of Filamin-B (FLNB) from Oryctolagus cuniculus (Rabbit).